The sequence spans 133 residues: MKTNHPETYDGRQDHIPSLQTPEIESFTNVYEGKDYTIDFTVPEFTAVCPKTGLPDFGVILVSYIPNKRCIELKSFKEYILSYRNVGIFHEFLVNKILEDVIKSIDPKYLKVIGDYNARGGIKTIVTREYKKP.

The active-site Thioimide intermediate is the Cys49. Asp56 acts as the Proton donor in catalysis. Residues 71 to 73 (IEL) and 90 to 91 (HE) each bind substrate.

The protein belongs to the GTP cyclohydrolase I family. QueF type 1 subfamily.

The protein resides in the cytoplasm. The enzyme catalyses 7-aminomethyl-7-carbaguanine + 2 NADP(+) = 7-cyano-7-deazaguanine + 2 NADPH + 3 H(+). It participates in tRNA modification; tRNA-queuosine biosynthesis. Functionally, catalyzes the NADPH-dependent reduction of 7-cyano-7-deazaguanine (preQ0) to 7-aminomethyl-7-deazaguanine (preQ1). This Leptospira interrogans serogroup Icterohaemorrhagiae serovar copenhageni (strain Fiocruz L1-130) protein is NADPH-dependent 7-cyano-7-deazaguanine reductase.